A 150-amino-acid chain; its full sequence is Ribonuclease K6 (150 aa).

Positions 1-23 (MVLCFPLLLLLLVLWGPVCLLHA) are cleaved as a signal peptide. The active-site Proton acceptor is His38. 4 disulfides stabilise this stretch: Cys46-Cys104, Cys60-Cys114, Cys78-Cys129, and Cys85-Cys92. N-linked (GlcNAc...) asparagine glycosylation occurs at Asn55. Residues 61-65 (KHQNT) and Lys86 each bind substrate. Residue Asn100 is glycosylated (N-linked (GlcNAc...) asparagine). Arg105 contacts substrate. His145 acts as the Proton donor in catalysis.

It belongs to the pancreatic ribonuclease family. As to quaternary structure, interacts (via N-terminus) with bacterial lipopolysaccharide (LPS).

The protein localises to the secreted. Its subcellular location is the lysosome. It is found in the cytoplasmic granule. Functionally, ribonuclease which shows a preference for the pyrimidines uridine and cytosine. Has potent antibacterial activity against a range of Gram-positive and Gram-negative bacteria, including P.aeruginosa, A.baumanii, M.luteus, S.aureus, E.faecalis, E.faecium, S.saprophyticus and E.coli. Causes loss of bacterial membrane integrity, and also promotes agglutination of Gram-negative bacteria. Probably contributes to urinary tract sterility. Bactericidal activity is independent of RNase activity. This chain is Ribonuclease K6 (RNASE6), found in Chlorocebus aethiops (Green monkey).